The chain runs to 103 residues: Nematocin (103 aa).

Residues 1–19 form the signal peptide; that stretch reads MGSSPILLVLAISIGLASA. The cysteines at positions 20 and 25 are disulfide-linked. Tyrosine 30 carries the post-translational modification Tyrosine amide. Residues 31–103 constitute a propeptide that is removed on maturation; the sequence is GRTIRCSSCG…QGGCQTSAMC (73 aa).

The protein belongs to the vasopressin/oxytocin family. Detected in thermosensory AFD neurons, neurosecretory NSM cells, AVK interneurons, pharyngeal neuron M5, and the mechanosensory DVA neuron. Detected in male-specific CP motor neurons.

It localises to the secreted. Functionally, ligand for the G-protein coupled receptor ntr-1. Plays a role in gustatory associative learning. Also plays a role in male mating behavior. This chain is Nematocin, found in Caenorhabditis elegans.